We begin with the raw amino-acid sequence, 172 residues long: Adenine phosphoribosyltransferase (172 aa).

It belongs to the purine/pyrimidine phosphoribosyltransferase family. Homodimer.

The protein localises to the cytoplasm. The catalysed reaction is AMP + diphosphate = 5-phospho-alpha-D-ribose 1-diphosphate + adenine. It functions in the pathway purine metabolism; AMP biosynthesis via salvage pathway; AMP from adenine: step 1/1. Functionally, catalyzes a salvage reaction resulting in the formation of AMP, that is energically less costly than de novo synthesis. The sequence is that of Adenine phosphoribosyltransferase from Methanococcus maripaludis (strain C5 / ATCC BAA-1333).